A 564-amino-acid polypeptide reads, in one-letter code: Hexose transporter HXT17 (564 aa).

A compositionally biased stretch (basic and acidic residues) spans 1 to 12 (MQSSTESDRDIQ). The disordered stretch occupies residues 1–22 (MQSSTESDRDIQDGPDADIHVA). At 1–52 (MQSSTESDRDIQDGPDADIHVAPPVEKEWSDGFDDNEVINGDNVEPPKRGLI) the chain is on the cytoplasmic side. Residues 53-73 (GYLVIYLLCYPISFGGFLPGW) form a helical membrane-spanning segment. Over 74–109 (DSGITAGFINMDNFKMNFGSYKHSTGEYYLSNVRMG) the chain is Extracellular. The chain crosses the membrane as a helical span at residues 110–130 (LLVAMFSIGCAIGGLIFARLA). Residues 131 to 136 (DTLGRR) lie on the Cytoplasmic side of the membrane. Residues 137–157 (LAIVIVVLVYMVGAIIQISSN) form a helical membrane-spanning segment. Residues 158 to 167 (HKWYQYFVGK) are Extracellular-facing. A helical transmembrane segment spans residues 168 to 188 (IIYGLGAGGCSVLCPMLLSEI). The Cytoplasmic portion of the chain corresponds to 189-194 (APTDLR). A helical transmembrane segment spans residues 195–215 (GGLVSLYQLNMTFGIFLGYCS). The Extracellular segment spans residues 216 to 229 (VYGTRKYDNTAQWR). A helical transmembrane segment spans residues 230 to 250 (VPLGLCFLWTLIIIIGMLLVP). Over 251–333 (ESPRYLIECE…VQTFLQLTGE (83 aa)) the chain is Cytoplasmic. The chain crosses the membrane as a helical span at residues 334-350 (NYFFFYGTTIFKSVGLT). The Extracellular portion of the chain corresponds to 351–356 (DGFETS). A helical membrane pass occupies residues 357 to 374 (IVLGTVNFFSTIIAVMVV). At 375–381 (DKIGRRK) the chain is on the cytoplasmic side. The helical transmembrane segment at 382–402 (CLLFGAAGMMACMVIFASIGV) threads the bilayer. Topologically, residues 403-424 (KCLYPHGQDGPSSKGAGNAMIV) are extracellular. A helical membrane pass occupies residues 425–445 (FTCFYIFCFATTWAPVAYIVV). Topologically, residues 446 to 462 (AESFPSKVKSRAMSIST) are cytoplasmic. A helical membrane pass occupies residues 463 to 483 (ACNWLWQFLIGFFTPFITGSI). Histidine 484 is a topological domain (extracellular). A helical transmembrane segment spans residues 485-505 (FYYGYVFVGCLVAMFLYVFFF). At 506 to 564 (LPETIGLSLEEIQLLYEEGIKPWKSASWVPPSRRGIPSEESKTEKKDWKKFLKFSKGSD) the chain is on the cytoplasmic side.

It belongs to the major facilitator superfamily. Sugar transporter (TC 2.A.1.1) family.

The protein resides in the membrane. In terms of biological role, probable glucose transporter. In Saccharomyces cerevisiae (strain ATCC 204508 / S288c) (Baker's yeast), this protein is Hexose transporter HXT17 (HXT17).